Reading from the N-terminus, the 179-residue chain is MRVLGIDPGSRHLGWGLLVRQGTRIEHVAHGVIDIDTSGTFAARLVEIDDELGKVIASHAPDAAAVESLFFAKDAQSAAKLGHARGVVLLRLARAGVPISEYPPALVKRTIVGRGAAEKAQVAQVMTAVLRLAAPPRPDAADALAIAMTHLSAAGFAAALAASGAPVPRRARPRRARLG.

Residues aspartate 7, glutamate 67, and aspartate 139 contribute to the active site. Residues aspartate 7, glutamate 67, and aspartate 139 each coordinate Mg(2+).

The protein belongs to the RuvC family. Homodimer which binds Holliday junction (HJ) DNA. The HJ becomes 2-fold symmetrical on binding to RuvC with unstacked arms; it has a different conformation from HJ DNA in complex with RuvA. In the full resolvosome a probable DNA-RuvA(4)-RuvB(12)-RuvC(2) complex forms which resolves the HJ. Mg(2+) is required as a cofactor.

It is found in the cytoplasm. The enzyme catalyses Endonucleolytic cleavage at a junction such as a reciprocal single-stranded crossover between two homologous DNA duplexes (Holliday junction).. The RuvA-RuvB-RuvC complex processes Holliday junction (HJ) DNA during genetic recombination and DNA repair. Endonuclease that resolves HJ intermediates. Cleaves cruciform DNA by making single-stranded nicks across the HJ at symmetrical positions within the homologous arms, yielding a 5'-phosphate and a 3'-hydroxyl group; requires a central core of homology in the junction. The consensus cleavage sequence is 5'-(A/T)TT(C/G)-3'. Cleavage occurs on the 3'-side of the TT dinucleotide at the point of strand exchange. HJ branch migration catalyzed by RuvA-RuvB allows RuvC to scan DNA until it finds its consensus sequence, where it cleaves and resolves the cruciform DNA. This is Crossover junction endodeoxyribonuclease RuvC from Sorangium cellulosum (strain So ce56) (Polyangium cellulosum (strain So ce56)).